We begin with the raw amino-acid sequence, 132 residues long: Two-component response regulator ORR42 (132 aa).

The Response regulatory domain maps to arginine 11–serine 125. Aspartate 61 carries the post-translational modification 4-aspartylphosphate.

Belongs to the ARR family. Type-C subfamily. Two-component system major event consists of a His-to-Asp phosphorelay between a sensor histidine kinase (HK) and a response regulator (RR). In plants, the His-to-Asp phosphorelay involves an additional intermediate named Histidine-containing phosphotransfer protein (HPt). This multistep phosphorelay consists of a His-Asp-His-Asp sequential transfer of a phosphate group between first a His and an Asp of the HK protein, followed by the transfer to a conserved His of the HPt protein and finally the transfer to an Asp in the receiver domain of the RR protein.

In terms of biological role, functions as a response regulator involved in His-to-Asp phosphorelay signal transduction system. Phosphorylation of the Asp residue in the receiver domain activates the ability of the protein to promote the transcription of target genes. May directly activate some type-A response regulators in response to cytokinins. This chain is Two-component response regulator ORR42, found in Oryza sativa subsp. japonica (Rice).